Consider the following 159-residue polypeptide: MKIKLVVVGKLKEKYLKDGIAEYVKRMGTMLPLEIIELADEKIPDNASEKEAEALKKREGDKILSRIQTGDKLAILAIQGKLMSSEELADFVKKAEVYGTGNLVFVIGGSLGLSDEVYKRSDLQISFGRMTLPHQLMRLVLVEQIYRAQMINRGSAYHK.

S-adenosyl-L-methionine contacts are provided by residues Leu-76, Gly-108, and 127–132 (FGRMTL).

This sequence belongs to the RNA methyltransferase RlmH family. As to quaternary structure, homodimer.

Its subcellular location is the cytoplasm. The catalysed reaction is pseudouridine(1915) in 23S rRNA + S-adenosyl-L-methionine = N(3)-methylpseudouridine(1915) in 23S rRNA + S-adenosyl-L-homocysteine + H(+). Functionally, specifically methylates the pseudouridine at position 1915 (m3Psi1915) in 23S rRNA. In Lactococcus lactis subsp. cremoris (strain SK11), this protein is Ribosomal RNA large subunit methyltransferase H.